Consider the following 265-residue polypeptide: 5'-nucleotidase SurE (265 aa).

4 residues coordinate a divalent metal cation: Asp8, Asp9, Ser39, and Asn96.

This sequence belongs to the SurE nucleotidase family. The cofactor is a divalent metal cation.

Its subcellular location is the cytoplasm. The catalysed reaction is a ribonucleoside 5'-phosphate + H2O = a ribonucleoside + phosphate. Its function is as follows. Nucleotidase that shows phosphatase activity on nucleoside 5'-monophosphates. This is 5'-nucleotidase SurE from Dehalococcoides mccartyi (strain CBDB1).